A 249-amino-acid chain; its full sequence is 5'-nucleotidase SurE (249 aa).

Asp8, Asp9, Ser39, and Asn91 together coordinate a divalent metal cation.

Belongs to the SurE nucleotidase family. The cofactor is a divalent metal cation.

Its subcellular location is the cytoplasm. It catalyses the reaction a ribonucleoside 5'-phosphate + H2O = a ribonucleoside + phosphate. In terms of biological role, nucleotidase that shows phosphatase activity on nucleoside 5'-monophosphates. This chain is 5'-nucleotidase SurE, found in Pseudomonas aeruginosa (strain LESB58).